Consider the following 616-residue polypeptide: UvrABC system protein C (616 aa).

The GIY-YIG domain maps to 12-97 (NDAGVYQYFD…IKQLKPKYNI (86 aa)). The 36-residue stretch at 203–238 (TKLISKLNEKMLQYSNDFRFEEAMTLRDRIKTIEKS) folds into the UVR domain.

The protein belongs to the UvrC family. In terms of assembly, interacts with UvrB in an incision complex.

The protein localises to the cytoplasm. Its function is as follows. The UvrABC repair system catalyzes the recognition and processing of DNA lesions. UvrC both incises the 5' and 3' sides of the lesion. The N-terminal half is responsible for the 3' incision and the C-terminal half is responsible for the 5' incision. This chain is UvrABC system protein C, found in Aliarcobacter butzleri (strain RM4018) (Arcobacter butzleri).